The sequence spans 382 residues: Mannitol-1-phosphate 5-dehydrogenase (382 aa).

3–14 (AVHFGAGNIGRG) contacts NAD(+).

This sequence belongs to the mannitol dehydrogenase family.

The catalysed reaction is D-mannitol 1-phosphate + NAD(+) = beta-D-fructose 6-phosphate + NADH + H(+). This Exiguobacterium sp. (strain ATCC BAA-1283 / AT1b) protein is Mannitol-1-phosphate 5-dehydrogenase.